The sequence spans 314 residues: Methionyl-tRNA formyltransferase (314 aa).

110-113 (SLLP) provides a ligand contact to (6S)-5,6,7,8-tetrahydrofolate.

Belongs to the Fmt family.

The catalysed reaction is L-methionyl-tRNA(fMet) + (6R)-10-formyltetrahydrofolate = N-formyl-L-methionyl-tRNA(fMet) + (6S)-5,6,7,8-tetrahydrofolate + H(+). Functionally, attaches a formyl group to the free amino group of methionyl-tRNA(fMet). The formyl group appears to play a dual role in the initiator identity of N-formylmethionyl-tRNA by promoting its recognition by IF2 and preventing the misappropriation of this tRNA by the elongation apparatus. This is Methionyl-tRNA formyltransferase from Dichelobacter nodosus (strain VCS1703A).